The sequence spans 610 residues: Glutamine--fructose-6-phosphate aminotransferase [isomerizing] (610 aa).

The active-site Nucleophile; for GATase activity is the C2. Positions 2–218 (CGIVGAVAQR…EGDVAEITRR (217 aa)) constitute a Glutamine amidotransferase type-2 domain. SIS domains follow at residues 286–426 (AADI…EQGR) and 459–600 (LATD…VDQP). The active-site For Fru-6P isomerization activity is K605.

Homodimer.

It is found in the cytoplasm. The catalysed reaction is D-fructose 6-phosphate + L-glutamine = D-glucosamine 6-phosphate + L-glutamate. Its function is as follows. Catalyzes the first step in hexosamine metabolism, converting fructose-6P into glucosamine-6P using glutamine as a nitrogen source. This Vibrio parahaemolyticus serotype O3:K6 (strain RIMD 2210633) protein is Glutamine--fructose-6-phosphate aminotransferase [isomerizing].